The primary structure comprises 288 residues: Acetyl-coenzyme A carboxylase carboxyl transferase subunit beta (288 aa).

A CoA carboxyltransferase N-terminal domain is found at 24–288 (LWVKCPESGE…TRTPRASEAA (265 aa)).

It belongs to the AccD/PCCB family. In terms of assembly, acetyl-CoA carboxylase is a heterohexamer composed of biotin carboxyl carrier protein (AccB), biotin carboxylase (AccC) and two subunits each of ACCase subunit alpha (AccA) and ACCase subunit beta (AccD).

Its subcellular location is the cytoplasm. It catalyses the reaction N(6)-carboxybiotinyl-L-lysyl-[protein] + acetyl-CoA = N(6)-biotinyl-L-lysyl-[protein] + malonyl-CoA. The protein operates within lipid metabolism; malonyl-CoA biosynthesis; malonyl-CoA from acetyl-CoA: step 1/1. Component of the acetyl coenzyme A carboxylase (ACC) complex. Biotin carboxylase (BC) catalyzes the carboxylation of biotin on its carrier protein (BCCP) and then the CO(2) group is transferred by the transcarboxylase to acetyl-CoA to form malonyl-CoA. The protein is Acetyl-coenzyme A carboxylase carboxyl transferase subunit beta of Methylocella silvestris (strain DSM 15510 / CIP 108128 / LMG 27833 / NCIMB 13906 / BL2).